A 1078-amino-acid polypeptide reads, in one-letter code: Teashirt homolog 1-A (1078 aa).

Disordered regions lie at residues 1–110 (MPRR…NVSY), 140–197 (KSNE…SNSA), and 271–300 (GHYRDDNKDRDAERTKRWSKPRKRSLMEME). Positions 26 to 36 (IEEDNLEDDGL) are enriched in acidic residues. Residues 57-71 (PSYQNSPISSATNQD) show a composition bias toward polar residues. Over residues 143-197 (ENSSPTTNTNKSSMSEATGSTSDPDTPTTIPSSSCTNTSTSISVTTSNSTNSNSA) the composition is skewed to low complexity. 2 C2H2-type zinc fingers span residues 248 to 272 (FKCKDCSAAYDTLVELTVHMNETGH) and 309 to 333 (LKCMYCGHSFESLQDLSVHMIKTKH). The segment covering 271–286 (GHYRDDNKDRDAERTK) has biased composition (basic and acidic residues). Positions 365–394 (DSPEQAGISPGASVSESAKDPKAANPYVTP) are disordered. The C2H2-type 3 zinc finger occupies 418 to 442 (LKCMECGSSHDSLQQLTAHMMVTGH). 2 disordered regions span residues 472 to 524 (LPPT…ENED) and 850 to 877 (RLTPKSSTPSTVSEKSDADGSSFEEAMD). Residues 497–524 (HSEEKKDPEKEKVNNCEVEKRIKEENED) are compositionally biased toward basic and acidic residues. Residues 853–862 (PKSSTPSTVS) are compositionally biased toward polar residues. The segment at residues 885-955 (RKGRQSNWNP…NVKYQLRRTG (71 aa)) is a DNA-binding region (homeobox). 2 C2H2-type zinc fingers span residues 970 to 992 (FFCNDCASQFRTASTYIGHLETH) and 1038 to 1061 (FQCKLCNRTFASKHAVKLHLSKTH).

Belongs to the teashirt C2H2-type zinc-finger protein family.

Its subcellular location is the nucleus. Probable transcriptional regulator involved in developmental processes. May act as a transcriptional repressor (Potential). Involved in two major neuronal regionalization processes: primary anteroposterior (AP) axis patterning of the CNS and segmentation of the cranial neuronal crest (CNS) development. In Xenopus laevis (African clawed frog), this protein is Teashirt homolog 1-A (tshz1-a).